The primary structure comprises 294 residues: Ventral anterior homeobox 2b (294 aa).

Over residues 1-10 (MGDGVSEERS) the composition is skewed to basic and acidic residues. Disordered stretches follow at residues 1–27 (MGDGVSEERSPLCGKSATSCSERVRDR), 43–65 (KDIPVTSTSSPGSSKEEVLDSQS), 149–168 (RRTKQKKDQSRDSEKRSSST), 190–223 (PAPPNMISSQNNMGTSSGNGTSLGTSGSTSPVIS), and 272–294 (SSAFEPYTRLDRKDTASGKKSTS). The homeobox DNA-binding region spans 98–157 (PKRTRTSFTAEQLYRLELEFQRCQYVVGRERTELARQLNLSETQVKVWFQNRRTKQKKDQ). The segment covering 154–165 (KKDQSRDSEKRS) has biased composition (basic and acidic residues). A compositionally biased stretch (low complexity) spans 197–219 (SSQNNMGTSSGNGTSLGTSGSTS). Residues 279-288 (TRLDRKDTAS) are compositionally biased toward basic and acidic residues.

This sequence belongs to the EMX homeobox family.

It localises to the nucleus. Functionally, transcription factor that may function in dorsoventral specification of the forebrain. Regulates the expression of Wnt signaling antagonists. The chain is Ventral anterior homeobox 2b (vax2-b) from Xenopus laevis (African clawed frog).